The sequence spans 327 residues: Opticin (327 aa).

The N-terminal stretch at 1-19 (MKLPAFLSLLALVLLEAGT) is a signal peptide. Residues Tyr61 and Tyr67 each carry the sulfotyrosine modification. An LRRNT domain is found at 111–148 (VLGSPNSHGLPTCLICVCLGSSVYCDDADLENIPPLPK). LRR repeat units lie at residues 149–170 (TTTY…DFKG), 173–194 (KLKR…ALRL), 197–218 (ALQD…PPAI), 219–237 (EVLD…QPEA), 243–263 (KLQF…PLPP), 264–285 (SLRS…AFCD), and 295–315 (WLED…PSAY). An intrachain disulfide couples Cys284 to Cys317.

The protein belongs to the small leucine-rich proteoglycan (SLRP) family. SLRP class III subfamily. In terms of assembly, homodimer. In terms of processing, O-glycosylated. Proteolytically cleaved by MMP1, MMP2, MMP3, MMP7, MMP8, MMP9, ADAMTS4, and ADAMTS5. Proteolytically cleaved by MMP13. Post-translationally, sulfated on tyrosine residues. As to expression, ocular tissues, cartilage, ligament, skin, muscle and testes.

It is found in the secreted. Its subcellular location is the extracellular space. The protein resides in the extracellular matrix. Its function is as follows. Inhibits angiogenesis in the vitreous humor of the eye, and therefore represses neovascularization. Binds collagen fibrils. May be involved in collagen fiber organization via regulation of other members of the small leucine-rich repeat proteoglycan superfamily. The chain is Opticin (OPTC) from Canis lupus familiaris (Dog).